The following is a 28-amino-acid chain: Antibacterial protein LC3 (28 aa).

In terms of biological role, antibacterial activity against X.campestris, especially strain G, and P.solacearum PO1. This is Antibacterial protein LC3 from Bacillus subtilis.